The sequence spans 1032 residues: Exo-beta-D-glucosaminidase (1032 aa).

Positions 1 to 32 (MSFRQKRTRIPLLAMTVTALAAAVCGVTTAPA) are cleaved as a signal peptide. Residues 33–46 (ATGAEVAVPLSVGA) constitute a propeptide that is removed on maturation. Asp-469 serves as the catalytic Proton donor. Glu-541 acts as the Nucleophile in catalysis. Residues 883-908 (SVRISGWNTGTQTVPADGSGPGPSDP) are disordered. The region spanning 909–1032 (VDYQAEDATI…GGPNVDKITL (124 aa)) is the CBM6 domain.

The protein belongs to the glycosyl hydrolase 2 family. In terms of assembly, monomer.

Its subcellular location is the secreted. The catalysed reaction is Hydrolysis of chitosan or chitosan oligosaccharides to remove successive D-glucosamine residues from the non-reducing termini.. Its function is as follows. Hydrolyzes chitosan and chitooligosaccharides with retention of anomeric configuration. Has maximum activity on chitotetraose, chitopentaose and their corresponding alcohols, with a slight decrease in the rate of hydrolysis on longer chains. Has no activity against beta-D-glucopyranoside, beta-D-xylopyranoside, beta-D-mannoside, beta-D-glucuronide, beta-D-galactoside, beta-D-N-acetylgalactosamide, beta-D-N-acetylglucosaminide and alpha-D-N-acetylglucosaminide. This chain is Exo-beta-D-glucosaminidase, found in Amycolatopsis orientalis (Nocardia orientalis).